The sequence spans 47 residues: Protein DVU_0533 (47 aa).

A helical membrane pass occupies residues tryptophan 18–leucine 37.

Its subcellular location is the cell membrane. Functionally, HMWC (high-molecular-weight cytochrome c), ORF2, ORF3, ORF4, ORF5 and ORF6 in the HMC operon form a transmembrane protein complex that allows electron flow from the periplasmic hydrogenase to the cytoplasmic enzymes that catalyze reduction of sulfates. The chain is Protein DVU_0533 from Nitratidesulfovibrio vulgaris (strain ATCC 29579 / DSM 644 / CCUG 34227 / NCIMB 8303 / VKM B-1760 / Hildenborough) (Desulfovibrio vulgaris).